The primary structure comprises 222 residues: Cytidylate kinase 2 (222 aa).

7 to 15 is a binding site for ATP; the sequence is GPSGAGKGT.

It belongs to the cytidylate kinase family. Type 1 subfamily.

The protein resides in the cytoplasm. It catalyses the reaction CMP + ATP = CDP + ADP. The enzyme catalyses dCMP + ATP = dCDP + ADP. The protein is Cytidylate kinase 2 of Haemophilus influenzae (strain ATCC 51907 / DSM 11121 / KW20 / Rd).